The chain runs to 160 residues: Myosin catalytic light chain LC-1, mantle muscle (160 aa).

Xaa1 carries the post-translational modification Blocked amino end (Xaa). EF-hand domains lie at Asp7–Asn44, Thr83–Arg118, and Ile119–Gly153.

Functionally, in molluscan muscle, calcium regulation is associated with myosin rather than with actin. Muscle myosin contains two types of light chains: the catalytic light chain, essential for ATPase activity, and the regulatory light chain, a calcium-binding protein responsible for Ca(2+) dependent binding and Ca(2+) dependent Mg-ATPase activity. This is Myosin catalytic light chain LC-1, mantle muscle from Todarodes pacificus (Japanese flying squid).